The sequence spans 310 residues: Thioredoxin reductase (310 aa).

FAD is bound at residue 34-41 (NGIQPGGQ). Cysteines 135 and 138 form a disulfide. 281-290 (DVQDKIYRQA) contacts FAD.

It belongs to the class-II pyridine nucleotide-disulfide oxidoreductase family. Homodimer. The cofactor is FAD.

The protein resides in the cytoplasm. It carries out the reaction [thioredoxin]-dithiol + NADP(+) = [thioredoxin]-disulfide + NADPH + H(+). This chain is Thioredoxin reductase (trxB), found in Rickettsia bellii (strain RML369-C).